The sequence spans 195 residues: Interferon tau-6 (195 aa).

The signal sequence occupies residues 1–23 (MAFVLSLLMALVLVSYGPGGSLG). Cystine bridges form between cysteine 24–cysteine 122 and cysteine 52–cysteine 162. Asparagine 101 is a glycosylation site (N-linked (GlcNAc...) asparagine).

It belongs to the alpha/beta interferon family. IFN-alphaII subfamily. As to expression, constitutively and exclusively expressed in the mononuclear cells of the extraembryonic trophectoderm.

Its subcellular location is the secreted. In terms of biological role, paracrine hormone primarily responsible for maternal recognition of pregnancy. Interacts with endometrial receptors, probably type I interferon receptors, and blocks estrogen receptor expression, preventing the estrogen-induced increase in oxytocin receptor expression in the endometrium. This results in the suppression of the pulsatile endometrial release of the luteolytic hormone prostaglandin F2-alpha, hindering the regression of the corpus luteum (luteolysis) and therefore a return to ovarian cyclicity. This, and a possible direct effect of IFN-tau on prostaglandin synthesis, leads in turn to continued ovarian progesterone secretion, which stimulates the secretion by the endometrium of the nutrients required for the growth of the conceptus. In summary, displays particularly high antiviral and antiproliferative potency concurrently with particular weak cytotoxicity, high antiluteolytic activity and immunomodulatory properties. In contrast with other IFNs, IFN-tau is not virally inducible. The polypeptide is Interferon tau-6 (IFNT6) (Ovis aries (Sheep)).